The primary structure comprises 517 residues: Protein ERGIC-53 (517 aa).

The first 30 residues, 1-30, serve as a signal peptide directing secretion; that stretch reads MAVSRRRVPQAGARSFFCALLLSFSQFTGS. At 31–484 the chain is on the lumenal side; sequence DGTGGDAAAP…DLPPFPSCLS (454 aa). Residues 52-275 enclose the L-type lectin-like domain; the sequence is RRFEYKYSFK…DVLSFLTFQL (224 aa). A carbohydrate-binding residues include serine 96 and aspartate 129. Positions 160, 162, and 164 each coordinate Ca(2+). A carbohydrate contacts are provided by asparagine 164 and histidine 186. Aspartate 189 contributes to the Ca(2+) binding site. A disulfide bridge connects residues cysteine 198 and cysteine 238. 259-261 contributes to the a carbohydrate binding site; that stretch reads GGL. Residue serine 433 is modified to Phosphoserine. Residues 485–505 traverse the membrane as a helical segment; the sequence is TIHFVIFVVVQTVLFVGYIMY. The Cytoplasmic segment spans residues 506 to 517; sequence RTQQEAAAKKFF. Residues 506–517 form a mediates interaction with RAB3GAP1, RAB3GAP2 and UBXN6 region; that stretch reads RTQQEAAAKKFF. The ER export motif signature appears at 516 to 517; the sequence is FF.

Exists both as a covalent disulfide-linked homohexamer, and a complex of three disulfide-linked dimers non-covalently kept together. Interacts with MCFD2. May interact with TMEM115. Interacts with RAB3GAP1 and RAB3GAP2. Interacts with UBXN6. Interacts with SERPINA1/alpha1-antitrypsin. Interacts with BET1.

It is found in the endoplasmic reticulum-Golgi intermediate compartment membrane. The protein localises to the golgi apparatus membrane. The protein resides in the endoplasmic reticulum membrane. Functionally, mannose-specific lectin. May recognize sugar residues of glycoproteins, glycolipids, or glycosylphosphatidyl inositol anchors and may be involved in the sorting or recycling of proteins, lipids, or both. The LMAN1-MCFD2 complex forms a specific cargo receptor for the ER-to-Golgi transport of selected proteins. The polypeptide is Protein ERGIC-53 (Lman1) (Mus musculus (Mouse)).